The sequence spans 571 residues: Proline--tRNA ligase (571 aa).

The protein belongs to the class-II aminoacyl-tRNA synthetase family. ProS type 1 subfamily. As to quaternary structure, homodimer.

The protein localises to the cytoplasm. The catalysed reaction is tRNA(Pro) + L-proline + ATP = L-prolyl-tRNA(Pro) + AMP + diphosphate. In terms of biological role, catalyzes the attachment of proline to tRNA(Pro) in a two-step reaction: proline is first activated by ATP to form Pro-AMP and then transferred to the acceptor end of tRNA(Pro). As ProRS can inadvertently accommodate and process non-cognate amino acids such as alanine and cysteine, to avoid such errors it has two additional distinct editing activities against alanine. One activity is designated as 'pretransfer' editing and involves the tRNA(Pro)-independent hydrolysis of activated Ala-AMP. The other activity is designated 'posttransfer' editing and involves deacylation of mischarged Ala-tRNA(Pro). The misacylated Cys-tRNA(Pro) is not edited by ProRS. The chain is Proline--tRNA ligase from Pseudomonas putida (strain ATCC 47054 / DSM 6125 / CFBP 8728 / NCIMB 11950 / KT2440).